Here is a 382-residue protein sequence, read N- to C-terminus: Chaperone protein DnaJ (382 aa).

Positions 5-70 (DYYEVLGVSR…DKKAAYDRYG (66 aa)) constitute a J domain. Residues 141-219 (GVQKTINVPA…CHGAGRVEKE (79 aa)) form a CR-type zinc finger. Positions 154, 157, 171, 174, 193, 196, 207, and 210 each coordinate Zn(2+). CXXCXGXG motif repeat units lie at residues 154 to 161 (CDSCKGTG), 171 to 178 (CPTCSGMG), 193 to 200 (CPTCNGMG), and 207 to 214 (CKSCHGAG).

The protein belongs to the DnaJ family. As to quaternary structure, homodimer. The cofactor is Zn(2+).

The protein localises to the cytoplasm. In terms of biological role, participates actively in the response to hyperosmotic and heat shock by preventing the aggregation of stress-denatured proteins and by disaggregating proteins, also in an autonomous, DnaK-independent fashion. Unfolded proteins bind initially to DnaJ; upon interaction with the DnaJ-bound protein, DnaK hydrolyzes its bound ATP, resulting in the formation of a stable complex. GrpE releases ADP from DnaK; ATP binding to DnaK triggers the release of the substrate protein, thus completing the reaction cycle. Several rounds of ATP-dependent interactions between DnaJ, DnaK and GrpE are required for fully efficient folding. Also involved, together with DnaK and GrpE, in the DNA replication of plasmids through activation of initiation proteins. The chain is Chaperone protein DnaJ from Cereibacter sphaeroides (strain ATCC 17025 / ATH 2.4.3) (Rhodobacter sphaeroides).